Here is a 503-residue protein sequence, read N- to C-terminus: Maturase K (503 aa).

It belongs to the intron maturase 2 family. MatK subfamily.

It is found in the plastid. Its subcellular location is the chloroplast. Functionally, usually encoded in the trnK tRNA gene intron. Probably assists in splicing its own and other chloroplast group II introns. The protein is Maturase K of Purshia tridentata (Antelope bitterbrush).